Consider the following 350-residue polypeptide: Galactokinase (350 aa).

Position 15-18 (15-18) interacts with substrate; sequence EHTD. Residues serine 47 and 99–105 contribute to the ATP site; that span reads GAGLSSS. Mg(2+)-binding residues include serine 105 and glutamate 137. The Proton acceptor role is filled by aspartate 149. Tyrosine 198 contacts substrate.

It belongs to the GHMP kinase family. GalK subfamily.

It is found in the cytoplasm. It carries out the reaction alpha-D-galactose + ATP = alpha-D-galactose 1-phosphate + ADP + H(+). Its pathway is carbohydrate metabolism; galactose metabolism. Catalyzes the transfer of the gamma-phosphate of ATP to D-galactose to form alpha-D-galactose-1-phosphate (Gal-1-P). This is Galactokinase from Pyrococcus horikoshii (strain ATCC 700860 / DSM 12428 / JCM 9974 / NBRC 100139 / OT-3).